A 542-amino-acid polypeptide reads, in one-letter code: MFSLQKKALQHIYMTPEDASDLTNDLLQHLGLYWNGPIIKMDTVVHLHNKMFSNQSVLKYALAKQANIKILETLVLWVEPEYALAQALKHNRKDVIECIFSHHLTTPSYHHIMHLTSSQELFEFFHLFICKSKNYHARMECLLYAATLYNFQNILEKNREYIVRHSIGNALFAIACKERHIHLIAWFATAGVFDTYDDSTLFNTAFRLGDYSLLEVACDLPITYPDHLIISMMQTAIQKNYFRFFKKLLTHFNVYRPIIITDAAYYNRRKILLLLFNQNIFNNFTILCALSAAIKGHASKKTLNLLINRLDAQMTVIDSVYYSIVKYNNIDCIPLLRHLKTFRIETLLSIAIHNNNIDIITACKAFLSKDKLYYLVLKMAIISRNDKLFKLYTEQENPMYIFTTMKTIISDLISHTVFQALAIECLREFHQEKQLPIASLLMVLAEHNYITKFKKACYAANMSDQKVKQALIKCLFIAAQKNCCQIFKYCFGSLLKVLSKHERNKFFNAVVFARKLASYDDHQEMIHLIDSLIKGFRYLIKD.

It belongs to the asfivirus MGF 505 family.

Its function is as follows. Plays a role in virus cell tropism, and may be required for efficient virus replication in macrophages. In African swine fever virus (isolate Pig/Kenya/KEN-50/1950) (ASFV), this protein is Protein MGF 505-11L.